We begin with the raw amino-acid sequence, 524 residues long: REH2-associated factor 1 (524 aa).

The N-terminal 22 residues, 1-22, are a transit peptide targeting the mitochondrion; sequence MRRWLVASMAPQLHQLLQPVRR. A C2H2-type 1; atypical zinc finger spans residues 48 to 70; sequence ASCPACSRVVHMCDMLTHLITAH. The segment at 121–147 adopts a C2H2-type 2; atypical zinc-finger fold; sequence YMCNWCDRRSDVYATRDKFLKHVADVH. Residues 226–249 form a C2H2-type 4 zinc finger; it reads FPCELCNRTFNSEIDLLQHLETRH. A C2H2-type 3; atypical zinc finger spans residues 286-312; sequence VICDLCVSSSKVYKMPSALFSHIRFKH. 4 consecutive C2H2-type zinc fingers follow at residues 334-357, 376-399, 406-429, and 443-465; these read FVCTVCQKAFASAAALDGHFNSKH, WWCHDCEKGFSSAKGLHGHMQNKH, HPCPACKRVFADIYSLEEHLSLQH, and VKCSTCERFFLSHEDLHRHAVKH. Residues 463 to 524 form a disordered region; that stretch reads VKHHKKDPRA…KTTEVSEVTS (62 aa). The segment covering 479-500 has biased composition (low complexity); sequence APTSASHVAASTSAAVPSEVEA.

Component of the REH2-associated complex (REH2C) composed of helicase REH2, associated factors H2F1 and H2F2, and mRNAs at various editing stages; the formation of the complex is RNA-independent. Within the complex, interacts with REH2; the interaction is direct. Interacts with various editing complexes including the RNA editing core (RECC) complex, the gRNA-binding (GRBC) complex (also known as the MRB1 complex) and the RNA editing mediator (REMC) complex.

It localises to the mitochondrion. In terms of biological role, plays an important role in mitochondrial mRNA editing by promoting the assembly of the mRNA editosome. Facilitates the recruitment of mRNA to the REH2C complex and promotes the interaction between various editing complexes including REH2C, GRBC, REMC and RECC complexes. In Trypanosoma brucei brucei (strain 927/4 GUTat10.1), this protein is REH2-associated factor 1.